A 118-amino-acid polypeptide reads, in one-letter code: MARVKTGVVRRRRHKKVLKLARGFFSARHKHFRKAKEQLERSLVYAYRDRRQKKRDFRRLWIVRINAACRLNDISYSRFINGLNKANIELDRKILADLAMNDAKAFAALAKQAKDALK.

This sequence belongs to the bacterial ribosomal protein bL20 family.

Binds directly to 23S ribosomal RNA and is necessary for the in vitro assembly process of the 50S ribosomal subunit. It is not involved in the protein synthesizing functions of that subunit. This is Large ribosomal subunit protein bL20 from Campylobacter concisus (strain 13826).